The sequence spans 173 residues: Acireductone dioxygenase 1 (173 aa).

Positions 96, 98, 102, and 140 each coordinate Fe(2+). Positions 96, 98, 102, and 140 each coordinate Ni(2+).

It belongs to the acireductone dioxygenase (ARD) family. Monomer. Fe(2+) is required as a cofactor. Requires Ni(2+) as cofactor.

It catalyses the reaction 1,2-dihydroxy-5-(methylsulfanyl)pent-1-en-3-one + O2 = 3-(methylsulfanyl)propanoate + CO + formate + 2 H(+). The catalysed reaction is 1,2-dihydroxy-5-(methylsulfanyl)pent-1-en-3-one + O2 = 4-methylsulfanyl-2-oxobutanoate + formate + 2 H(+). Its pathway is amino-acid biosynthesis; L-methionine biosynthesis via salvage pathway; L-methionine from S-methyl-5-thio-alpha-D-ribose 1-phosphate: step 5/6. In terms of biological role, catalyzes 2 different reactions between oxygen and the acireductone 1,2-dihydroxy-3-keto-5-methylthiopentene (DHK-MTPene) depending upon the metal bound in the active site. Fe-containing acireductone dioxygenase (Fe-ARD) produces formate and 2-keto-4-methylthiobutyrate (KMTB), the alpha-ketoacid precursor of methionine in the methionine recycle pathway. Ni-containing acireductone dioxygenase (Ni-ARD) produces methylthiopropionate, carbon monoxide and formate, and does not lie on the methionine recycle pathway. The chain is Acireductone dioxygenase 1 from Pectobacterium atrosepticum (strain SCRI 1043 / ATCC BAA-672) (Erwinia carotovora subsp. atroseptica).